The sequence spans 304 residues: Dihydroorotate dehydrogenase B (NAD(+)), catalytic subunit (304 aa).

FMN contacts are provided by residues Ser-22 and Lys-46–Gly-47. Substrate is bound by residues Lys-46 and Asn-70–Leu-74. Residues Asn-100 and Asn-128 each coordinate FMN. Asn-128 is a substrate binding site. The Nucleophile role is filled by Cys-131. Residues Lys-166 and Ile-192 each contribute to the FMN site. Asn-193–Thr-194 lines the substrate pocket. FMN is bound by residues Gly-218, Gly-244 to Gly-245, and Gly-266 to Thr-267.

Belongs to the dihydroorotate dehydrogenase family. Type 1 subfamily. In terms of assembly, heterotetramer of 2 PyrK and 2 PyrD type B subunits. The cofactor is FMN.

The protein resides in the cytoplasm. The enzyme catalyses (S)-dihydroorotate + NAD(+) = orotate + NADH + H(+). The protein operates within pyrimidine metabolism; UMP biosynthesis via de novo pathway; orotate from (S)-dihydroorotate (NAD(+) route): step 1/1. Its function is as follows. Catalyzes the conversion of dihydroorotate to orotate with NAD(+) as electron acceptor. In Pelobacter propionicus (strain DSM 2379 / NBRC 103807 / OttBd1), this protein is Dihydroorotate dehydrogenase B (NAD(+)), catalytic subunit (pyrD).